A 168-amino-acid polypeptide reads, in one-letter code: Photosystem I assembly protein Ycf3 (168 aa).

TPR repeat units lie at residues 35–68 (AFTY…EIDP), 72–105 (SYIL…NPFL), and 120–153 (GEQA…TPGN).

It belongs to the Ycf3 family.

The protein resides in the plastid. The protein localises to the chloroplast thylakoid membrane. Its function is as follows. Essential for the assembly of the photosystem I (PSI) complex. May act as a chaperone-like factor to guide the assembly of the PSI subunits. This chain is Photosystem I assembly protein Ycf3, found in Ipomoea purpurea (Common morning glory).